A 268-amino-acid polypeptide reads, in one-letter code: Tryptophan synthase alpha chain (268 aa).

Residues Glu49 and Asp60 each act as proton acceptor in the active site.

It belongs to the TrpA family. Tetramer of two alpha and two beta chains.

The enzyme catalyses (1S,2R)-1-C-(indol-3-yl)glycerol 3-phosphate + L-serine = D-glyceraldehyde 3-phosphate + L-tryptophan + H2O. Its pathway is amino-acid biosynthesis; L-tryptophan biosynthesis; L-tryptophan from chorismate: step 5/5. Functionally, the alpha subunit is responsible for the aldol cleavage of indoleglycerol phosphate to indole and glyceraldehyde 3-phosphate. The polypeptide is Tryptophan synthase alpha chain (Shigella boydii serotype 4 (strain Sb227)).